A 330-amino-acid polypeptide reads, in one-letter code: NmrA-like family domain-containing oxidoreductase notO (330 aa).

Residues 12–17, 38–42, 59–60, 80–82, and 160–163 each bind NADP(+); these read VGIGSL, HHFAQ, RS, IEA, and LGGG. Residues 12–32 traverse the membrane as a helical segment; the sequence is VGIGSLPAGLVALFMGATSGI. The interaction with ASS1 stretch occupies residues 158-202; sequence SVLGGGLESPLNEQDLDLRDPKNWTFWSSSMHSGTMGTLTLERIA. 2 N-linked (GlcNAc...) asparagine glycosylation sites follow: asparagine 180 and asparagine 207.

Belongs to the NmrA-type oxidoreductase family.

Its subcellular location is the membrane. Functionally, nmrA-like family domain-containing oxidoreductase; part of the gene cluster that mediates the biosynthesis of notoamide, a fungal indole alkaloid that belongs to a family of natural products containing a characteristic bicyclo[2.2.2]diazaoctane core. The first step of notoamide biosynthesis involves coupling of L-proline and L-tryptophan by the bimodular NRPS notE, to produce cyclo-L-tryptophan-L-proline called brevianamide F. The reverse prenyltransferase notF then acts as a deoxybrevianamide E synthase and converts brevianamide F to deoxybrevianamide E via reverse prenylation at C-2 of the indole ring leading to the bicyclo[2.2.2]diazaoctane core. Deoxybrevianamide E is further hydroxylated at C-6 of the indole ring, likely catalyzed by the cytochrome P450 monooxygenase notG, to yield 6-hydroxy-deoxybrevianamide E. 6-hydroxy-deoxybrevianamide E is a specific substrate of the prenyltransferase notC for normal prenylation at C-7 to produce 6-hydroxy-7-prenyl-deoxybrevianamide, also called notoamide S. As the proposed pivotal branching point in notoamide biosynthesis, notoamide S can be diverted to notoamide E through an oxidative pyran ring closure putatively catalyzed by either notH cytochrome P450 monooxygenase or the notD FAD-linked oxidoreductase. This step would be followed by an indole 2,3-epoxidation-initiated pinacol-like rearrangement catalyzed by the notB FAD-dependent monooxygenase leading to the formation of notoamide C and notoamide D. On the other hand notoamide S is converted to notoamide T by notH (or notD), a bifunctional oxidase that also functions as the intramolecular Diels-Alderase responsible for generation of (+)-notoamide T. To generate antipodal (-)-notoaminide T, notH' (or notD') in Aspergillus versicolor is expected to catalyze a Diels-Alder reaction leading to the opposite stereochemistry. The remaining oxidoreductase notD (or notH) likely catalyzes the oxidative pyran ring formation to yield (+)-stephacidin A. The FAD-dependent monooxygenase notI is highly similar to notB and is predicted to catalyze a similar conversion from (+)-stephacidin A to (-)-notoamide B via the 2,3-epoxidation of (+)-stephacidin A followed by a pinacol-type rearrangement. Finally, it remains unclear which enzyme could be responsible for the final hydroxylation steps leading to notoamide A and sclerotiamide. The function of notO in the notoamide biosynthesis has not been determined yet. The protein is NmrA-like family domain-containing oxidoreductase notO of Aspergillus sp. (strain MF297-2).